Reading from the N-terminus, the 610-residue chain is Propanediol dehydratase-reactivating factor large subunit (610 aa).

N11–S13 serves as a coordination point for ATP. Mg(2+)-binding residues include T105, D166, and D183. Residues E459–K462, G557–S558, and R591 contribute to the ATP site.

Belongs to the DdrA/PduG family. As to quaternary structure, forms a heterotetramer PduG(2)/PduH(2). Mg(2+) is required as a cofactor.

The protein resides in the bacterial microcompartment. The enzyme catalyses ATP + H2O = ADP + phosphate + H(+). Its pathway is polyol metabolism; 1,2-propanediol degradation. Its function is as follows. Large subunit of the propanediol dehydratase-reactivating factor (DDR), which reactivates suicidally inhibited adenosylcobalamin-dependent propanediol dehydratase (diol dehydratase, DDH) found in the bacterial microcompartment (BMC) dedicated to 1,2-propanediol (1,2-PD) degradation. Reactivates inactivated DDH in the presence of ATP, Mg(2+) and free adenosylcobalamin (AdoCbl), by mediating the exchange of the tightly bound damaged cofactor AdoCbl for a free intact one. This subunit contains the adenosine nucleotide binding site. The 1,2-PD-specific bacterial microcompartment (BMC) concentrates low levels of 1,2-PD catabolic enzymes, concentrates volatile reaction intermediates thus enhancing pathway flux and keeps the level of toxic, mutagenic propionaldehyde low. In Salmonella typhimurium (strain LT2 / SGSC1412 / ATCC 700720), this protein is Propanediol dehydratase-reactivating factor large subunit.